The sequence spans 314 residues: Tetraacyldisaccharide 4'-kinase (314 aa).

ATP is bound at residue 61–68 (IVGGSGKT).

Belongs to the LpxK family.

The catalysed reaction is a lipid A disaccharide + ATP = a lipid IVA + ADP + H(+). It functions in the pathway glycolipid biosynthesis; lipid IV(A) biosynthesis; lipid IV(A) from (3R)-3-hydroxytetradecanoyl-[acyl-carrier-protein] and UDP-N-acetyl-alpha-D-glucosamine: step 6/6. Its function is as follows. Transfers the gamma-phosphate of ATP to the 4'-position of a tetraacyldisaccharide 1-phosphate intermediate (termed DS-1-P) to form tetraacyldisaccharide 1,4'-bis-phosphate (lipid IVA). The polypeptide is Tetraacyldisaccharide 4'-kinase (Aliarcobacter butzleri (strain RM4018) (Arcobacter butzleri)).